Reading from the N-terminus, the 189-residue chain is Large ribosomal subunit protein bL9 (189 aa).

This sequence belongs to the bacterial ribosomal protein bL9 family.

In terms of biological role, binds to the 23S rRNA. This Brucella anthropi (strain ATCC 49188 / DSM 6882 / CCUG 24695 / JCM 21032 / LMG 3331 / NBRC 15819 / NCTC 12168 / Alc 37) (Ochrobactrum anthropi) protein is Large ribosomal subunit protein bL9.